The chain runs to 324 residues: Phospho-N-acetylmuramoyl-pentapeptide-transferase (324 aa).

10 consecutive transmembrane segments (helical) span residues 5–25, 52–72, 77–97, 122–142, 149–169, 176–196, 201–221, 227–247, 253–273, and 302–322; these read GLLV…PLFI, PTMG…IMAI, LGAE…IGFL, VIAI…YIMI, FELG…GSNA, LDGL…IIAV, FGVA…LVFN, VFMG…VAIL, LLVI…IQVI, and VVVT…YIGV.

This sequence belongs to the glycosyltransferase 4 family. MraY subfamily. Mg(2+) serves as cofactor.

The protein resides in the cell membrane. The enzyme catalyses UDP-N-acetyl-alpha-D-muramoyl-L-alanyl-gamma-D-glutamyl-meso-2,6-diaminopimeloyl-D-alanyl-D-alanine + di-trans,octa-cis-undecaprenyl phosphate = di-trans,octa-cis-undecaprenyl diphospho-N-acetyl-alpha-D-muramoyl-L-alanyl-D-glutamyl-meso-2,6-diaminopimeloyl-D-alanyl-D-alanine + UMP. Its pathway is cell wall biogenesis; peptidoglycan biosynthesis. Catalyzes the initial step of the lipid cycle reactions in the biosynthesis of the cell wall peptidoglycan: transfers peptidoglycan precursor phospho-MurNAc-pentapeptide from UDP-MurNAc-pentapeptide onto the lipid carrier undecaprenyl phosphate, yielding undecaprenyl-pyrophosphoryl-MurNAc-pentapeptide, known as lipid I. This Bacillus anthracis protein is Phospho-N-acetylmuramoyl-pentapeptide-transferase.